Consider the following 422-residue polypeptide: Glutamate 2,3-aminomutase (422 aa).

The region spanning 150-371 (RRYPDRLIIN…AIPTYIVNAP (222 aa)) is the Radical SAM core domain. 3 residues coordinate [4Fe-4S] cluster: C164, C168, and C171. N6-(pyridoxal phosphate)lysine is present on K376.

The protein belongs to the radical SAM superfamily. It depends on pyridoxal 5'-phosphate as a cofactor. Requires [4Fe-4S] cluster as cofactor.

It carries out the reaction L-glutamate = 3-aminopentanedioate. Its function is as follows. Catalyzes the interconversion of L-glutamate and L-beta-glutamate. Does not have L-lysine 2,3-aminomutase activity. The polypeptide is Glutamate 2,3-aminomutase (eam) (Clostridioides difficile (strain 630) (Peptoclostridium difficile)).